The chain runs to 671 residues: MESIEQQLTELRTTLRHHEYLYHVMDAPEIPDAEYDRLMRELRELETKHPELITPDSPTQRVGAAPLAAFSQIRHEVPMLSLDNVFDEESFLAFNKRVQDRLKSNEKVTWCCELKLDGLAVSILYENGVLVSAATRGDGTTGEDITSNVRTIRAIPLKLHGENIPARLEVRGEVFLPQAGFEKINEDARRTGGKVFANPRNAAAGSLRQLDPRITAKRPLTFFCYGVGVLEGGELPDTHLGRLMQFKAWGLPVSDRVTLCESAEEVLAFYHKVEEDRPTLGFDIDGVVIKVNSLAQQEQLGFVARAPRWAVAFKFPAQEQMTFVRDVEFQVGRTGAITPVARLEPVHVAGVLVSNATLHNADEIERLGLRIGDKVVIRRAGDVIPQVVNVVLSERPEDTREVVFPTHCPVCGSDVERVEGEAVARCTGGLICGAQRKESLKHFVSRRAMDVDGMGDKIIDQLVEKEYVHTPADLFKLTAGKLTGLERMGPKSAQNVVNALEKAKETTFARFLYALGVREVGEATAAGLAAYFGTLEALEAASIEELQKVPDVGIVVASHVHNFFAEESNRNVISELLAEGVHWPEPIVINAEEIDSPFAGKTVVLTGSLSQMSRDDAKARLVELGAKVAGSVSKKTDLVIAGEAAGSKLAKAQELGIEVIDETEMLRLLGS.

Residues 32 to 36 (DAEYD), 81 to 82 (SL), and Glu113 each bind NAD(+). The N6-AMP-lysine intermediate role is filled by Lys115. Positions 136, 173, 290, and 314 each coordinate NAD(+). Cys408, Cys411, Cys426, and Cys432 together coordinate Zn(2+). The 79-residue stretch at 593-671 (EIDSPFAGKT…ETEMLRLLGS (79 aa)) folds into the BRCT domain.

The protein belongs to the NAD-dependent DNA ligase family. LigA subfamily. Requires Mg(2+) as cofactor. It depends on Mn(2+) as a cofactor.

The enzyme catalyses NAD(+) + (deoxyribonucleotide)n-3'-hydroxyl + 5'-phospho-(deoxyribonucleotide)m = (deoxyribonucleotide)n+m + AMP + beta-nicotinamide D-nucleotide.. DNA ligase that catalyzes the formation of phosphodiester linkages between 5'-phosphoryl and 3'-hydroxyl groups in double-stranded DNA using NAD as a coenzyme and as the energy source for the reaction. It is essential for DNA replication and repair of damaged DNA. The sequence is that of DNA ligase from Escherichia coli O1:K1 / APEC.